The primary structure comprises 798 residues: Elongation factor G, mitochondrial (798 aa).

Residues 1 to 24 (MRVIRAAAALNSSCAASSRQGARY) constitute a mitochondrion transit peptide. The 287-residue stretch at 97 to 383 (SMVRNIGIAA…AVCDYLPNPG (287 aa)) folds into the tr-type G domain. GTP-binding positions include 106–113 (AHIDSGKT), 181–185 (DTPGH), and 235–238 (NKMD).

The protein belongs to the TRAFAC class translation factor GTPase superfamily. Classic translation factor GTPase family. EF-G/EF-2 subfamily.

The protein resides in the mitochondrion. It functions in the pathway protein biosynthesis; polypeptide chain elongation. In terms of biological role, mitochondrial GTPase that catalyzes the GTP-dependent ribosomal translocation step during translation elongation. During this step, the ribosome changes from the pre-translocational (PRE) to the post-translocational (POST) state as the newly formed A-site-bound peptidyl-tRNA and P-site-bound deacylated tRNA move to the P and E sites, respectively. Catalyzes the coordinated movement of the two tRNA molecules, the mRNA and conformational changes in the ribosome. The sequence is that of Elongation factor G, mitochondrial from Chaetomium globosum (strain ATCC 6205 / CBS 148.51 / DSM 1962 / NBRC 6347 / NRRL 1970) (Soil fungus).